Reading from the N-terminus, the 262-residue chain is Small ribosomal subunit protein eS4 (262 aa).

Residues Leu42–Val105 enclose the S4 RNA-binding domain. The region spanning Gly178–Lys211 is the KOW domain.

This sequence belongs to the eukaryotic ribosomal protein eS4 family. In terms of assembly, component of the small ribosomal subunit. Mature ribosomes consist of a small (40S) and a large (60S) subunit. The 40S subunit contains about 32 different proteins and 1 molecule of RNA (18S). The 60S subunit contains 45 different proteins and 3 molecules of RNA (25S, 5.8S and 5S).

The protein resides in the cytoplasm. In terms of biological role, component of the ribosome, a large ribonucleoprotein complex responsible for the synthesis of proteins in the cell. The small ribosomal subunit (SSU) binds messenger RNAs (mRNAs) and translates the encoded message by selecting cognate aminoacyl-transfer RNA (tRNA) molecules. The large subunit (LSU) contains the ribosomal catalytic site termed the peptidyl transferase center (PTC), which catalyzes the formation of peptide bonds, thereby polymerizing the amino acids delivered by tRNAs into a polypeptide chain. The nascent polypeptides leave the ribosome through a tunnel in the LSU and interact with protein factors that function in enzymatic processing, targeting, and the membrane insertion of nascent chains at the exit of the ribosomal tunnel. In Candida albicans (strain SC5314 / ATCC MYA-2876) (Yeast), this protein is Small ribosomal subunit protein eS4 (RPS42).